Here is a 64-residue protein sequence, read N- to C-terminus: Large ribosomal subunit protein bL35 (64 aa).

The protein belongs to the bacterial ribosomal protein bL35 family.

In Vibrio atlanticus (strain LGP32) (Vibrio splendidus (strain Mel32)), this protein is Large ribosomal subunit protein bL35.